The sequence spans 229 residues: Prolactin (229 aa).

The first 30 residues, M1 to S30, serve as a signal peptide directing secretion. 3 cysteine pairs are disulfide-bonded: C34–C41, C88–C204, and C221–C229.

The protein belongs to the somatotropin/prolactin family.

Its subcellular location is the secreted. In Gallus gallus (Chicken), this protein is Prolactin (PRL).